A 198-amino-acid polypeptide reads, in one-letter code: Probable GTP-binding protein EngB (198 aa).

One can recognise an EngB-type G domain in the interval 22–196 (NLSEIAFVGR…WNWIKGQAEL (175 aa)). Residues 30–37 (GRSNVGKS), 57–61 (GKTQT), 75–78 (DVPG), 142–145 (TKAD), and 175–177 (FSA) each bind GTP. 2 residues coordinate Mg(2+): serine 37 and threonine 59.

Belongs to the TRAFAC class TrmE-Era-EngA-EngB-Septin-like GTPase superfamily. EngB GTPase family. Mg(2+) serves as cofactor.

In terms of biological role, necessary for normal cell division and for the maintenance of normal septation. This Oenococcus oeni (strain ATCC BAA-331 / PSU-1) protein is Probable GTP-binding protein EngB.